Here is an 892-residue protein sequence, read N- to C-terminus: DNA mismatch repair protein MutS (892 aa).

Gly-634 to Ser-641 contacts ATP.

The protein belongs to the DNA mismatch repair MutS family.

This protein is involved in the repair of mismatches in DNA. It is possible that it carries out the mismatch recognition step. This protein has a weak ATPase activity. The sequence is that of DNA mismatch repair protein MutS from Paraburkholderia phymatum (strain DSM 17167 / CIP 108236 / LMG 21445 / STM815) (Burkholderia phymatum).